Here is a 270-residue protein sequence, read N- to C-terminus: Acyl-[acyl-carrier-protein]--UDP-N-acetylglucosamine O-acyltransferase (270 aa).

This sequence belongs to the transferase hexapeptide repeat family. LpxA subfamily. As to quaternary structure, homotrimer.

The protein localises to the cytoplasm. It catalyses the reaction a (3R)-hydroxyacyl-[ACP] + UDP-N-acetyl-alpha-D-glucosamine = a UDP-3-O-[(3R)-3-hydroxyacyl]-N-acetyl-alpha-D-glucosamine + holo-[ACP]. It participates in glycolipid biosynthesis; lipid IV(A) biosynthesis; lipid IV(A) from (3R)-3-hydroxytetradecanoyl-[acyl-carrier-protein] and UDP-N-acetyl-alpha-D-glucosamine: step 1/6. Involved in the biosynthesis of lipid A, a phosphorylated glycolipid that anchors the lipopolysaccharide to the outer membrane of the cell. This Helicobacter pylori (strain J99 / ATCC 700824) (Campylobacter pylori J99) protein is Acyl-[acyl-carrier-protein]--UDP-N-acetylglucosamine O-acyltransferase.